The primary structure comprises 291 residues: ATP synthase gamma chain (291 aa).

Belongs to the ATPase gamma chain family. As to quaternary structure, F-type ATPases have 2 components, CF(1) - the catalytic core - and CF(0) - the membrane proton channel. CF(1) has five subunits: alpha(3), beta(3), gamma(1), delta(1), epsilon(1). CF(0) has three main subunits: a, b and c.

Its subcellular location is the cell inner membrane. Its function is as follows. Produces ATP from ADP in the presence of a proton gradient across the membrane. The gamma chain is believed to be important in regulating ATPase activity and the flow of protons through the CF(0) complex. The protein is ATP synthase gamma chain of Cupriavidus metallidurans (strain ATCC 43123 / DSM 2839 / NBRC 102507 / CH34) (Ralstonia metallidurans).